The following is a 139-amino-acid chain: ATP synthase epsilon chain (139 aa).

The protein belongs to the ATPase epsilon chain family. F-type ATPases have 2 components, CF(1) - the catalytic core - and CF(0) - the membrane proton channel. CF(1) has five subunits: alpha(3), beta(3), gamma(1), delta(1), epsilon(1). CF(0) has three main subunits: a, b and c.

The protein resides in the cell inner membrane. Its function is as follows. Produces ATP from ADP in the presence of a proton gradient across the membrane. In Pseudomonas putida (strain GB-1), this protein is ATP synthase epsilon chain.